A 198-amino-acid polypeptide reads, in one-letter code: CASP-like protein 2B1 (198 aa).

Residues 1–12 (MAAAMGLERKAK) are Cytoplasmic-facing. A helical transmembrane segment spans residues 13–33 (VAEVALRCAVCALAALAAALV). The Extracellular segment spans residues 34 to 55 (GTGSQTRTFFSLEKKARFTDMK). The chain crosses the membrane as a helical span at residues 56-76 (ALVLLVAAHGAAAVYSLLQLA). The Cytoplasmic portion of the chain corresponds to 77–91 (RCAAAAAWKGGSNGG). A helical membrane pass occupies residues 92–112 (AAVVAWSVFSCDQAVAYALMA). At 113 to 149 (ATAAALQSSVVGKRGQPELQWMPVCGLYGAFCRRVGE) the chain is on the extracellular side. The helical transmembrane segment at 150–170 (GLAAAVAAGLAAVLLAAVSAF) threads the bilayer. The Cytoplasmic portion of the chain corresponds to 171–198 (NLFRLYGGGGGGRKSSAGAVSGNGANTW).

This sequence belongs to the Casparian strip membrane proteins (CASP) family. Homodimer and heterodimers.

Its subcellular location is the cell membrane. This is CASP-like protein 2B1 from Oryza sativa subsp. japonica (Rice).